The chain runs to 253 residues: MAEMSYRTALVTGASSGLGRGLALWLARRGVRVFAAGRRLPQLQALRDEAQAAGVTVEPVELDVTKADATLERIRALDAEAGGLDLVVANAGVGGTTNAKRLPWERVRGIIDTNVTGAAATLSAVLPQMVERKRGHLVGVSSLAGFRGLAGHAAYSASKAFLSTFMESLRVDLRGTGVRVTCIYPGFVKSELTATNNFPMPFLMETHDAVELMGKGIVRGDAEVSFPWQLAVPTRMAKVLPNPLFDAAARRLR.

10–34 (LVTGASSGLGRGLALWLARRGVRVF) lines the NADP(+) pocket. Serine 142 lines the substrate pocket. Tyrosine 155 functions as the Proton acceptor in the catalytic mechanism.

Belongs to the short-chain dehydrogenases/reductases (SDR) family.

This is an uncharacterized protein from Myxococcus xanthus (strain DK1622).